The primary structure comprises 931 residues: Netrin receptor UNC5C (931 aa).

The signal sequence occupies residues 1–40 (MRKGLRATAARCGLGLGYLLQMLVLPALALLSASGTGSAA). Over 41-380 (QDDDFFHELP…APDSDDVALY (340 aa)) the chain is Extracellular. Residues 62–159 (PHFLIEPEEA…AGTTKSRKAY (98 aa)) enclose the Ig-like domain. 9 cysteine pairs are disulfide-bonded: C83/C144, C95/C142, C188/C239, C272/C309, C276/C313, C287/C299, C328/C362, C332/C367, and C340/C352. An Ig-like C2-type domain is found at 161–256 (RIAYLRKTFE…KRKSTTATVI (96 aa)). N236 carries N-linked (GlcNAc...) asparagine glycosylation. TSP type-1 domains follow at residues 260–314 (NGGW…TLCP) and 316–368 (DGRW…GLCM). N-linked (GlcNAc...) asparagine glycosylation occurs at N361. The helical transmembrane segment at 381-401 (VGIVIAVTVCLAITVVVALFV) threads the bilayer. The Cytoplasmic segment spans residues 402–931 (YRKNHRDFES…VVSLAAEGQY (530 aa)). Residues 402–931 (YRKNHRDFES…VVSLAAEGQY (530 aa)) form a required for netrin-mediated axon repulsion of neuronal growth cones region. Phosphoserine is present on S502. The ZU5 domain maps to 530–673 (CTAFGTFNSL…LSTYALVGQS (144 aa)). Residue Y568 is modified to Phosphotyrosine. The segment at 694 to 712 (SLEYSIRVYCLDDTQDALK) is interaction with DCC. The 80-residue stretch at 850–929 (QKLCSSLDAP…ETVVSLAAEG (80 aa)) folds into the Death domain.

Belongs to the unc-5 family. In terms of assembly, interacts with DCC (via cytoplasmic domain). Interacts (tyrosine phosphorylated form) with PTPN11. Interacts (via extracellular domain) with FLRT3 (via extracellular domain). Interacts (via Ig-like C2-type domain) with DSCAM (via extracellular domain). Interacts (via death domain) with DAPK1. Interacts (via cytoplasmic domain) with TUBB3; this interaction is decreased by NTN1/Netrin-1. Post-translationally, proteolytically cleaved by caspases during apoptosis. The cleavage does not take place when the receptor is associated with netrin ligand. Its cleavage by caspases is required to induce apoptosis. In terms of processing, phosphorylated on different cytoplasmic tyrosine residues. Phosphorylation of Tyr-568 leads to an interaction with PTPN11 phosphatase, suggesting that its activity is regulated by phosphorylation/dephosphorylation. Tyrosine phosphorylation is netrin-dependent. As to expression, detected in brain (at protein level). Mainly expressed in brain. Also expressed in kidney. Not expressed in developing or adult lung.

It is found in the cell membrane. The protein localises to the cell surface. The protein resides in the synapse. Its subcellular location is the synaptosome. It localises to the cell projection. It is found in the axon. The protein localises to the dendrite. The protein resides in the growth cone. Its subcellular location is the lamellipodium. It localises to the filopodium. In terms of biological role, receptor for netrin required for axon guidance. Mediates axon repulsion of neuronal growth cones in the developing nervous system upon ligand binding. NTN1/Netrin-1 binding might cause dissociation of UNC5C from polymerized TUBB3 in microtubules and thereby lead to increased microtubule dynamics and axon repulsion. Axon repulsion in growth cones may also be caused by its association with DCC that may trigger signaling for repulsion. Might also collaborate with DSCAM in NTN1-mediated axon repulsion independently of DCC. Also involved in corticospinal tract axon guidance independently of DCC. Involved in dorsal root ganglion axon projection towards the spinal cord. It also acts as a dependence receptor required for apoptosis induction when not associated with netrin ligand. The chain is Netrin receptor UNC5C (Unc5c) from Rattus norvegicus (Rat).